Here is a 180-residue protein sequence, read N- to C-terminus: Large ribosomal subunit protein uL16 (180 aa).

It belongs to the universal ribosomal protein uL16 family.

The protein is Large ribosomal subunit protein uL16 of Hyperthermus butylicus (strain DSM 5456 / JCM 9403 / PLM1-5).